The primary structure comprises 960 residues: Semaphorin-6C (960 aa).

The signal sequence occupies residues 1–23; the sequence is MPRAPHSMPLLLLLLLSLPQAQT. At 24–635 the chain is on the extracellular side; it reads AFPQDPIPLL…ASASRSIPIP (612 aa). In terms of domain architecture, Sema spans 29 to 515; that stretch reads PIPLLTSDLQ…FPGCIVYLSL (487 aa). The N-linked (GlcNAc...) asparagine glycan is linked to Asn-69. Intrachain disulfides connect Cys-110-Cys-120, Cys-138-Cys-147, Cys-261-Cys-372, and Cys-286-Cys-331. An N-linked (GlcNAc...) asparagine glycan is attached at Asn-285. Asn-436 carries N-linked (GlcNAc...) asparagine glycosylation. Intrachain disulfides connect Cys-478-Cys-509, Cys-518-Cys-536, Cys-524-Cys-569, and Cys-528-Cys-544. A disordered region spans residues 555-624; sequence VDLTGNQESM…HTQGVRRDLS (70 aa). Residues 636-656 form a helical membrane-spanning segment; the sequence is LLLACVAAAFALGASVSGLLV. Residues 657–960 are Cytoplasmic-facing; sequence SCACRRANRR…PAPHGSHFNF (304 aa). Disordered regions lie at residues 685 to 725, 745 to 792, and 806 to 960; these read LARL…SPPE, ASGG…PGQE, and HGPQ…HFNF. Positions 899 to 909 are enriched in low complexity; sequence RVPSGGPSRYS. Positions 922–935 are enriched in basic and acidic residues; it reads PDGHRGRSLKRVDV. A compositionally biased stretch (pro residues) spans 940–952; it reads SPKPPLATPPQPA.

Belongs to the semaphorin family. In terms of tissue distribution, expressed in many regions of the developing nervous system, probably in neurons and their precursors, but also in nonneural tissue such as immature muscle and dermis. In adult, strong expression in the skeletal muscle and moderate expression in the brain, where cerebellum shows the highest expression. Also expressed in almost all areas of the CNS.

The protein localises to the cell membrane. Functionally, shows growth cone collapsing activity on dorsal root ganglion (DRG) neurons in vitro. May be a stop signal for the DRG neurons in their target areas, and possibly also for other neurons. May also be involved in the maintenance and remodeling of neuronal connections. The polypeptide is Semaphorin-6C (Sema6c) (Rattus norvegicus (Rat)).